We begin with the raw amino-acid sequence, 622 residues long: Chaperone protein HscA homolog (622 aa).

It belongs to the heat shock protein 70 family.

Chaperone involved in the maturation of iron-sulfur cluster-containing proteins. Has a low intrinsic ATPase activity which is markedly stimulated by HscB. This is Chaperone protein HscA homolog from Azoarcus sp. (strain BH72).